Consider the following 198-residue polypeptide: GTP-binding protein RHO1 (198 aa).

16-23 (GDGACGKT) serves as a coordination point for GTP. The Effector region motif lies at 38–46 (YVPTVFENY). GTP contacts are provided by residues 63–67 (DTAGQ) and 121–124 (CKSD). Residue C195 is modified to Cysteine methyl ester. A lipid anchor (S-geranylgeranyl cysteine) is attached at C195. Positions 196–198 (VVL) are cleaved as a propeptide — removed in mature form.

The protein belongs to the small GTPase superfamily. Rho family.

Its subcellular location is the cell membrane. This chain is GTP-binding protein RHO1 (RHO1), found in Candida albicans (strain SC5314 / ATCC MYA-2876) (Yeast).